A 289-amino-acid polypeptide reads, in one-letter code: MAEQTASGYIQHHLQNLTFGHLPNGEWGFAHTAAEAKEMGFWAFHVDTLGWSVALGLIFVLIFRMAAKKATSGQPGALQNFVEVLVEFVDGSVKDSFHGRSAVIAPLALTIFVWVFLMNAVDLVPVDWIPQLAMMISGDSHIPFRAVSTTDPNATLGMALSVFALIIFYSIKVKGIGGFIGELTLHPFGSKNLFVQALLIPVNFLLEFVTLIAKPISLALRLFGNMYAGELVFILIAVMFGSGLLWLSGLGVVLQWAWAVFHILIITLQAFIFMMLTIVYLSMAHEDNH.

The next 6 membrane-spanning stretches (helical) occupy residues 43–63 (AFHV…VLIF), 101–121 (SAVI…MNAV), 160–180 (LSVF…GGFI), 193–213 (LFVQ…TLIA), 232–252 (VFIL…GLGV), and 259–279 (AVFH…LTIV).

This sequence belongs to the ATPase A chain family. As to quaternary structure, F-type ATPases have 2 components, CF(1) - the catalytic core - and CF(0) - the membrane proton channel. CF(1) has five subunits: alpha(3), beta(3), gamma(1), delta(1), epsilon(1). CF(0) has three main subunits: a(1), b(2) and c(9-12). The alpha and beta chains form an alternating ring which encloses part of the gamma chain. CF(1) is attached to CF(0) by a central stalk formed by the gamma and epsilon chains, while a peripheral stalk is formed by the delta and b chains.

Its subcellular location is the cell inner membrane. Key component of the proton channel; it plays a direct role in the translocation of protons across the membrane. The polypeptide is ATP synthase subunit a (Pseudomonas syringae pv. syringae (strain B728a)).